The sequence spans 473 residues: Endoglucanase B (473 aa).

The N-terminal stretch at 1-17 is a signal peptide; sequence MKFLNTFSLLSLAIIGS. The segment at 18–367 is catalytic; that stretch reads KAMKNISSKE…GLIKGLGNSI (350 aa). E173 acts as the Proton donor in catalysis. E295 serves as the catalytic Nucleophile. Residues 365–387 form a linker region; that stretch reads NSIKTRTTIRRTTTTTTSQSQPT. 2 CBM10 domains span residues 391 to 427 and 436 to 473; these read SCFS…CGIK and ICWS…CGIY.

The protein belongs to the glycosyl hydrolase 5 (cellulase A) family.

It carries out the reaction Endohydrolysis of (1-&gt;4)-beta-D-glucosidic linkages in cellulose, lichenin and cereal beta-D-glucans.. Functionally, rate of hydrolysis of cellulo-oligosaccharides increased with increasing chain length from cellotriose to cellopentaose. This chain is Endoglucanase B (CELB), found in Neocallimastix patriciarum (Rumen fungus).